The chain runs to 140 residues: UPF0102 protein alr1796 (140 aa).

This sequence belongs to the UPF0102 family.

This is UPF0102 protein alr1796 from Nostoc sp. (strain PCC 7120 / SAG 25.82 / UTEX 2576).